A 918-amino-acid polypeptide reads, in one-letter code: Protein translocase subunit SecA (918 aa).

Residues Gln87, 105–109 (GEGKT), and Asp516 contribute to the ATP site. Zn(2+) is bound by residues Cys902, Cys904, Cys913, and His914.

This sequence belongs to the SecA family. Monomer and homodimer. Part of the essential Sec protein translocation apparatus which comprises SecA, SecYEG and auxiliary proteins SecDF-YajC and YidC. Zn(2+) is required as a cofactor.

The protein resides in the cell inner membrane. The protein localises to the cytoplasm. The catalysed reaction is ATP + H2O + cellular proteinSide 1 = ADP + phosphate + cellular proteinSide 2.. Part of the Sec protein translocase complex. Interacts with the SecYEG preprotein conducting channel. Has a central role in coupling the hydrolysis of ATP to the transfer of proteins into and across the cell membrane, serving both as a receptor for the preprotein-SecB complex and as an ATP-driven molecular motor driving the stepwise translocation of polypeptide chains across the membrane. The polypeptide is Protein translocase subunit SecA (Methylibium petroleiphilum (strain ATCC BAA-1232 / LMG 22953 / PM1)).